The chain runs to 221 residues: Leucine rich adaptor protein 1-like (221 aa).

Met-1 is modified (N-acetylmethionine). The segment at 24–81 (LARSLRGEELAPREGAADPSGVGGSCSSSSSCSSFAPSVSSSSSSSPASGSPRRSHPS) is disordered. The span at 28–39 (LRGEELAPREGA) shows a compositional bias: basic and acidic residues. Residues 48 to 75 (SCSSSSSCSSFAPSVSSSSSSSPASGSP) are compositionally biased toward low complexity.

This is Leucine rich adaptor protein 1-like (Lurap1l) from Mus musculus (Mouse).